The chain runs to 347 residues: CDK2-associated and cullin domain-containing protein 1 (347 aa).

Over residues 1–11 the composition is skewed to acidic residues; it reads MEESMEEEEML. 2 disordered regions span residues 1-63 and 320-347; these read MEES…LPGG and RGDQSRKRAGDELAYNSPSACASSRGYR. Residues 34-49 are compositionally biased toward pro residues; it reads QPPPAPPLPPPPPPRP.

This sequence belongs to the cullin family. As to quaternary structure, interacts with CDK2.

In terms of biological role, cell cycle associated protein capable of promoting cell proliferation through the activation of CDK2 at the G1/S phase transition. The protein is CDK2-associated and cullin domain-containing protein 1 (Cacul1) of Rattus norvegicus (Rat).